Here is a 95-residue protein sequence, read N- to C-terminus: Large ribosomal subunit protein bL25 (95 aa).

Belongs to the bacterial ribosomal protein bL25 family. In terms of assembly, part of the 50S ribosomal subunit; part of the 5S rRNA/L5/L18/L25 subcomplex. Contacts the 5S rRNA. Binds to the 5S rRNA independently of L5 and L18.

This is one of the proteins that binds to the 5S RNA in the ribosome where it forms part of the central protuberance. This chain is Large ribosomal subunit protein bL25, found in Tolumonas auensis (strain DSM 9187 / NBRC 110442 / TA 4).